Consider the following 343-residue polypeptide: Probable dual-specificity RNA methyltransferase RlmN (343 aa).

Glu83 functions as the Proton acceptor in the catalytic mechanism. In terms of domain architecture, Radical SAM core spans 89-323; the sequence is YLDRKTICVS…VSVRRSRGKD (235 aa). A disulfide bridge links Cys96 with Cys328. The [4Fe-4S] cluster site is built by Cys103, Cys107, and Cys110. S-adenosyl-L-methionine-binding positions include 153–154, Ser185, 209–211, and Asn285; these read GE and SLH. Catalysis depends on Cys328, which acts as the S-methylcysteine intermediate.

Belongs to the radical SAM superfamily. RlmN family. It depends on [4Fe-4S] cluster as a cofactor.

The protein localises to the cytoplasm. It catalyses the reaction adenosine(2503) in 23S rRNA + 2 reduced [2Fe-2S]-[ferredoxin] + 2 S-adenosyl-L-methionine = 2-methyladenosine(2503) in 23S rRNA + 5'-deoxyadenosine + L-methionine + 2 oxidized [2Fe-2S]-[ferredoxin] + S-adenosyl-L-homocysteine. It carries out the reaction adenosine(37) in tRNA + 2 reduced [2Fe-2S]-[ferredoxin] + 2 S-adenosyl-L-methionine = 2-methyladenosine(37) in tRNA + 5'-deoxyadenosine + L-methionine + 2 oxidized [2Fe-2S]-[ferredoxin] + S-adenosyl-L-homocysteine. Specifically methylates position 2 of adenine 2503 in 23S rRNA and position 2 of adenine 37 in tRNAs. In Deinococcus deserti (strain DSM 17065 / CIP 109153 / LMG 22923 / VCD115), this protein is Probable dual-specificity RNA methyltransferase RlmN.